A 520-amino-acid chain; its full sequence is GMP synthase [glutamine-hydrolyzing] (520 aa).

The Glutamine amidotransferase type-1 domain occupies threonine 9–aspartate 202. Cysteine 86 serves as the catalytic Nucleophile. Residues histidine 176 and glutamate 178 contribute to the active site. Residues tryptophan 203 to arginine 395 enclose the GMPS ATP-PPase domain. Serine 230 to serine 236 lines the ATP pocket.

Homodimer.

The catalysed reaction is XMP + L-glutamine + ATP + H2O = GMP + L-glutamate + AMP + diphosphate + 2 H(+). It participates in purine metabolism; GMP biosynthesis; GMP from XMP (L-Gln route): step 1/1. Catalyzes the synthesis of GMP from XMP. The sequence is that of GMP synthase [glutamine-hydrolyzing] from Mesorhizobium japonicum (strain LMG 29417 / CECT 9101 / MAFF 303099) (Mesorhizobium loti (strain MAFF 303099)).